Here is a 202-residue protein sequence, read N- to C-terminus: Securin-2 (202 aa).

The disordered stretch occupies residues 60–105; sequence TRKALGTVNRATEKSVKTNGPRKQKQPSFSAKKMTEKTVKTKSSVP. The short motif at 61-64 is the D-box element; that stretch reads RKAL. The short motif at 163–173 is the SH3-binding element; it reads PPSPVKMPSPP.

The protein belongs to the securin family. As to expression, expressed at low levels in the pituitary, liver, spleen, prostate, testis, ovary, small intestine and colon. Also expressed in various pituitary, testicular, liver and ovarian tumors.

It is found in the cytoplasm. The protein localises to the nucleus. This chain is Securin-2 (PTTG2), found in Homo sapiens (Human).